A 333-amino-acid chain; its full sequence is Holliday junction branch migration complex subunit RuvB (333 aa).

The segment at 1 to 182 (MTNRILDMEQ…FGITGHMEYY (182 aa)) is large ATPase domain (RuvB-L). Residues Leu-21, Arg-22, Gly-63, Lys-66, Thr-67, Thr-68, 129-131 (EDF), Arg-172, Tyr-182, and Arg-219 each bind ATP. Thr-67 is a Mg(2+) binding site. The segment at 183–253 (ELADLTEIVE…ITDKALTMLD (71 aa)) is small ATPAse domain (RuvB-S). The segment at 256–333 (REGLDYVDQK…EHLGYPYTEK (78 aa)) is head domain (RuvB-H). DNA is bound by residues Arg-292, Arg-311, Arg-313, and Arg-316.

This sequence belongs to the RuvB family. Homohexamer. Forms an RuvA(8)-RuvB(12)-Holliday junction (HJ) complex. HJ DNA is sandwiched between 2 RuvA tetramers; dsDNA enters through RuvA and exits via RuvB. An RuvB hexamer assembles on each DNA strand where it exits the tetramer. Each RuvB hexamer is contacted by two RuvA subunits (via domain III) on 2 adjacent RuvB subunits; this complex drives branch migration. In the full resolvosome a probable DNA-RuvA(4)-RuvB(12)-RuvC(2) complex forms which resolves the HJ.

The protein resides in the cytoplasm. It catalyses the reaction ATP + H2O = ADP + phosphate + H(+). The RuvA-RuvB-RuvC complex processes Holliday junction (HJ) DNA during genetic recombination and DNA repair, while the RuvA-RuvB complex plays an important role in the rescue of blocked DNA replication forks via replication fork reversal (RFR). RuvA specifically binds to HJ cruciform DNA, conferring on it an open structure. The RuvB hexamer acts as an ATP-dependent pump, pulling dsDNA into and through the RuvAB complex. RuvB forms 2 homohexamers on either side of HJ DNA bound by 1 or 2 RuvA tetramers; 4 subunits per hexamer contact DNA at a time. Coordinated motions by a converter formed by DNA-disengaged RuvB subunits stimulates ATP hydrolysis and nucleotide exchange. Immobilization of the converter enables RuvB to convert the ATP-contained energy into a lever motion, pulling 2 nucleotides of DNA out of the RuvA tetramer per ATP hydrolyzed, thus driving DNA branch migration. The RuvB motors rotate together with the DNA substrate, which together with the progressing nucleotide cycle form the mechanistic basis for DNA recombination by continuous HJ branch migration. Branch migration allows RuvC to scan DNA until it finds its consensus sequence, where it cleaves and resolves cruciform DNA. This Streptococcus suis (strain 98HAH33) protein is Holliday junction branch migration complex subunit RuvB.